The following is a 373-amino-acid chain: Dual-specificity RNA methyltransferase RlmN (373 aa).

The active-site Proton acceptor is Glu-94. The 240-residue stretch at 100 to 339 (EDDRATLCVS…VIVRKTRGDD (240 aa)) folds into the Radical SAM core domain. Cys-107 and Cys-344 are disulfide-bonded. [4Fe-4S] cluster contacts are provided by Cys-114, Cys-118, and Cys-121. S-adenosyl-L-methionine is bound by residues 168–169 (GE), Ser-200, 222–224 (SIH), and Asn-301. The active-site S-methylcysteine intermediate is the Cys-344.

It belongs to the radical SAM superfamily. RlmN family. It depends on [4Fe-4S] cluster as a cofactor.

Its subcellular location is the cytoplasm. The catalysed reaction is adenosine(2503) in 23S rRNA + 2 reduced [2Fe-2S]-[ferredoxin] + 2 S-adenosyl-L-methionine = 2-methyladenosine(2503) in 23S rRNA + 5'-deoxyadenosine + L-methionine + 2 oxidized [2Fe-2S]-[ferredoxin] + S-adenosyl-L-homocysteine. It carries out the reaction adenosine(37) in tRNA + 2 reduced [2Fe-2S]-[ferredoxin] + 2 S-adenosyl-L-methionine = 2-methyladenosine(37) in tRNA + 5'-deoxyadenosine + L-methionine + 2 oxidized [2Fe-2S]-[ferredoxin] + S-adenosyl-L-homocysteine. In terms of biological role, specifically methylates position 2 of adenine 2503 in 23S rRNA and position 2 of adenine 37 in tRNAs. m2A2503 modification seems to play a crucial role in the proofreading step occurring at the peptidyl transferase center and thus would serve to optimize ribosomal fidelity. The chain is Dual-specificity RNA methyltransferase RlmN from Shewanella woodyi (strain ATCC 51908 / MS32).